We begin with the raw amino-acid sequence, 274 residues long: Dermonecrotic toxin SdSicTox-betaIIB1biii (274 aa).

H5 is a catalytic residue. 2 residues coordinate Mg(2+): E25 and D27. H41 (nucleophile) is an active-site residue. 2 disulfide bridges follow: C45-C51 and C47-C190. Residue D85 participates in Mg(2+) binding.

The protein belongs to the arthropod phospholipase D family. Class II subfamily. Requires Mg(2+) as cofactor. As to expression, expressed by the venom gland.

The protein resides in the secreted. It catalyses the reaction an N-(acyl)-sphingosylphosphocholine = an N-(acyl)-sphingosyl-1,3-cyclic phosphate + choline. It carries out the reaction an N-(acyl)-sphingosylphosphoethanolamine = an N-(acyl)-sphingosyl-1,3-cyclic phosphate + ethanolamine. The enzyme catalyses a 1-acyl-sn-glycero-3-phosphocholine = a 1-acyl-sn-glycero-2,3-cyclic phosphate + choline. The catalysed reaction is a 1-acyl-sn-glycero-3-phosphoethanolamine = a 1-acyl-sn-glycero-2,3-cyclic phosphate + ethanolamine. Functionally, dermonecrotic toxins cleave the phosphodiester linkage between the phosphate and headgroup of certain phospholipids (sphingolipid and lysolipid substrates), forming an alcohol (often choline) and a cyclic phosphate. This toxin acts on sphingomyelin (SM). It may also act on ceramide phosphoethanolamine (CPE), lysophosphatidylcholine (LPC) and lysophosphatidylethanolamine (LPE), but not on lysophosphatidylserine (LPS), and lysophosphatidylglycerol (LPG). It acts by transphosphatidylation, releasing exclusively cyclic phosphate products as second products. Induces dermonecrosis, hemolysis, increased vascular permeability, edema, inflammatory response, and platelet aggregation. This chain is Dermonecrotic toxin SdSicTox-betaIIB1biii, found in Sicarius cf. damarensis (strain GJB-2008) (Six-eyed sand spider).